The primary structure comprises 223 residues: ATP-dependent dethiobiotin synthetase BioD (223 aa).

12–17 (EIGKTH) provides a ligand contact to ATP. Thr-16 serves as a coordination point for Mg(2+). Residue Lys-37 is part of the active site. A substrate-binding site is contributed by Ser-41. Residues Asp-52 and 118–121 (EGVG) contribute to the ATP site. Mg(2+) is bound by residues Asp-52 and Glu-118.

The protein belongs to the dethiobiotin synthetase family. In terms of assembly, homodimer. Mg(2+) is required as a cofactor.

The protein localises to the cytoplasm. The catalysed reaction is (7R,8S)-7,8-diammoniononanoate + CO2 + ATP = (4R,5S)-dethiobiotin + ADP + phosphate + 3 H(+). It participates in cofactor biosynthesis; biotin biosynthesis; biotin from 7,8-diaminononanoate: step 1/2. Functionally, catalyzes a mechanistically unusual reaction, the ATP-dependent insertion of CO2 between the N7 and N8 nitrogen atoms of 7,8-diaminopelargonic acid (DAPA, also called 7,8-diammoniononanoate) to form a ureido ring. The sequence is that of ATP-dependent dethiobiotin synthetase BioD from Acidiphilium cryptum (strain JF-5).